A 487-amino-acid chain; its full sequence is GTPase Der (487 aa).

EngA-type G domains lie at 3 to 167 (LTLA…DEME) and 203 to 378 (LQVA…EVWN). GTP is bound by residues 9 to 16 (GRPNVGKS), 56 to 60 (DTAGL), and 119 to 122 (NKAE). Residues 167–190 (EQQAEEQAPETDVDLDPEDEDGEE) are compositionally biased toward acidic residues. The interval 167-191 (EQQAEEQAPETDVDLDPEDEDGEEV) is disordered. GTP contacts are provided by residues 209 to 216 (GRPNAGKS), 256 to 260 (DTAGM), and 321 to 324 (NKWD). The KH-like domain occupies 379-465 (RRIPTAALNR…RLTLRGQGDK (87 aa)). The segment at 458–487 (TLRGQGDKNPYKGRRKKNAGALAKHLKSRG) is disordered. A compositionally biased stretch (basic residues) spans 468–487 (YKGRRKKNAGALAKHLKSRG).

It belongs to the TRAFAC class TrmE-Era-EngA-EngB-Septin-like GTPase superfamily. EngA (Der) GTPase family. In terms of assembly, associates with the 50S ribosomal subunit.

In terms of biological role, GTPase that plays an essential role in the late steps of ribosome biogenesis. The sequence is that of GTPase Der from Ruegeria pomeroyi (strain ATCC 700808 / DSM 15171 / DSS-3) (Silicibacter pomeroyi).